Here is a 322-residue protein sequence, read N- to C-terminus: DNA repair and recombination protein RadA (322 aa).

Residue 105–112 (GMYGSGKT) participates in ATP binding.

This sequence belongs to the eukaryotic RecA-like protein family.

Functionally, involved in DNA repair and in homologous recombination. Binds and assemble on single-stranded DNA to form a nucleoprotein filament. Hydrolyzes ATP in a ssDNA-dependent manner and promotes DNA strand exchange between homologous DNA molecules. This chain is DNA repair and recombination protein RadA, found in Methanococcus maripaludis (strain C7 / ATCC BAA-1331).